The following is a 373-amino-acid chain: ATP phosphoribosyltransferase regulatory subunit (373 aa).

The protein belongs to the class-II aminoacyl-tRNA synthetase family. HisZ subfamily. As to quaternary structure, heteromultimer composed of HisG and HisZ subunits.

Its subcellular location is the cytoplasm. It participates in amino-acid biosynthesis; L-histidine biosynthesis; L-histidine from 5-phospho-alpha-D-ribose 1-diphosphate: step 1/9. Functionally, required for the first step of histidine biosynthesis. May allow the feedback regulation of ATP phosphoribosyltransferase activity by histidine. The sequence is that of ATP phosphoribosyltransferase regulatory subunit from Rhizobium etli (strain CIAT 652).